A 148-amino-acid chain; its full sequence is MSVLTAAEIMTLIPNRYPILFMDRVDELNPGESITCTKNVTINEEFFQGHFPGNPVMPGVLIIESLAQAASILILKSEQFQGETAYLGAIKQAKFRKVVRPGDVLSLYVEMVKQRSNMGTVKCTASVGEKVACSADLTFIVAAADDKI.

His-50 is an active-site residue.

This sequence belongs to the thioester dehydratase family. FabZ subfamily.

The protein resides in the cytoplasm. The enzyme catalyses a (3R)-hydroxyacyl-[ACP] = a (2E)-enoyl-[ACP] + H2O. Involved in unsaturated fatty acids biosynthesis. Catalyzes the dehydration of short chain beta-hydroxyacyl-ACPs and long chain saturated and unsaturated beta-hydroxyacyl-ACPs. This is 3-hydroxyacyl-[acyl-carrier-protein] dehydratase FabZ from Levilactobacillus brevis (strain ATCC 367 / BCRC 12310 / CIP 105137 / JCM 1170 / LMG 11437 / NCIMB 947 / NCTC 947) (Lactobacillus brevis).